Consider the following 176-residue polypeptide: NAD(P)H-quinone oxidoreductase subunit 6, chloroplastic (176 aa).

5 consecutive transmembrane segments (helical) span residues 10 to 30, 32 to 52, 61 to 81, 92 to 112, and 152 to 172; these read FLLV…VLLP, PIFS…LYIL, AQLL…VMFM, LWTI…FLLM, and FFLP…GAIS.

It belongs to the complex I subunit 6 family. NDH is composed of at least 16 different subunits, 5 of which are encoded in the nucleus.

The protein localises to the plastid. It localises to the chloroplast thylakoid membrane. The enzyme catalyses a plastoquinone + NADH + (n+1) H(+)(in) = a plastoquinol + NAD(+) + n H(+)(out). It carries out the reaction a plastoquinone + NADPH + (n+1) H(+)(in) = a plastoquinol + NADP(+) + n H(+)(out). Functionally, NDH shuttles electrons from NAD(P)H:plastoquinone, via FMN and iron-sulfur (Fe-S) centers, to quinones in the photosynthetic chain and possibly in a chloroplast respiratory chain. The immediate electron acceptor for the enzyme in this species is believed to be plastoquinone. Couples the redox reaction to proton translocation, and thus conserves the redox energy in a proton gradient. This is NAD(P)H-quinone oxidoreductase subunit 6, chloroplastic (ndhG) from Arabidopsis thaliana (Mouse-ear cress).